Here is a 162-residue protein sequence, read N- to C-terminus: Inner membrane protein YbjO (162 aa).

At 1–23 (MEDETLGFFKKTSSSHARLNVPA) the chain is on the periplasmic side. The helical transmembrane segment at 24 to 44 (LVQVAALAIIMIRGLDVLMIF) threads the bilayer. Topologically, residues 45–66 (NTLGVRGIGEFIHRSVQTWSLT) are cytoplasmic. The helical transmembrane segment at 67-87 (LVFLSSLVLVFIEIWCAFSLV) threads the bilayer. The Periplasmic portion of the chain corresponds to 88 to 94 (KGRRWAR). The chain crosses the membrane as a helical span at residues 95–115 (WLYLLTQITAASYLWAASLGY). The Cytoplasmic portion of the chain corresponds to 116-162 (GYPELFSIPGESKREIFHSLMLQKLPDMLILMLLFVPSTSRRFFQLQ).

It is found in the cell inner membrane. The protein is Inner membrane protein YbjO (ybjO) of Escherichia coli O157:H7.